A 456-amino-acid chain; its full sequence is Adenylosuccinate lyase (456 aa).

N(6)-(1,2-dicarboxyethyl)-AMP is bound by residues 15-16 (RY), 90-92 (NHD), and 122-123 (TS). H171 functions as the Proton donor/acceptor in the catalytic mechanism. Q247 provides a ligand contact to N(6)-(1,2-dicarboxyethyl)-AMP. S295 (proton donor/acceptor) is an active-site residue. Residues S296, 301–303 (KIN), N309, R335, and 340–344 (STVLR) each bind N(6)-(1,2-dicarboxyethyl)-AMP.

Belongs to the lyase 1 family. Adenylosuccinate lyase subfamily. In terms of assembly, homotetramer. Residues from neighboring subunits contribute catalytic and substrate-binding residues to each active site.

The enzyme catalyses N(6)-(1,2-dicarboxyethyl)-AMP = fumarate + AMP. It catalyses the reaction (2S)-2-[5-amino-1-(5-phospho-beta-D-ribosyl)imidazole-4-carboxamido]succinate = 5-amino-1-(5-phospho-beta-D-ribosyl)imidazole-4-carboxamide + fumarate. The protein operates within purine metabolism; AMP biosynthesis via de novo pathway; AMP from IMP: step 2/2. It participates in purine metabolism; IMP biosynthesis via de novo pathway; 5-amino-1-(5-phospho-D-ribosyl)imidazole-4-carboxamide from 5-amino-1-(5-phospho-D-ribosyl)imidazole-4-carboxylate: step 2/2. In terms of biological role, catalyzes two reactions in de novo purine nucleotide biosynthesis. Catalyzes the breakdown of 5-aminoimidazole- (N-succinylocarboxamide) ribotide (SAICAR or 2-[5-amino-1-(5-phospho-beta-D-ribosyl)imidazole-4-carboxamido]succinate) to 5-aminoimidazole-4-carboxamide ribotide (AICAR or 5-amino-1-(5-phospho-beta-D-ribosyl)imidazole-4-carboxamide) and fumarate, and of adenylosuccinate (ADS or N(6)-(1,2-dicarboxyethyl)-AMP) to adenosine monophosphate (AMP) and fumarate. The chain is Adenylosuccinate lyase (purB) from Buchnera aphidicola subsp. Schizaphis graminum (strain Sg).